Reading from the N-terminus, the 235-residue chain is MAAKIFCLIMLLGLSASAATASIFPQCSQAPIASLLPPYLSPAMSSVCENPILLPYRIQQAIAAGILPLSPLFLQQSSALLQQLPLVHLLAQNIRAQQLQQLVLANLAAYSQQQQFLPFNQLAALNSAAYLQQQQLLPFSQLAAAYPRQFLPFNQLAALNSHAYVQQQQLLPFSQLAAVSPAAFLTQQQLLPFYLHTAPNVGTLLQLQQLLPFDQLALTNPAAFYQQPIIGGALF.

The signal sequence occupies residues 1–21 (MAAKIFCLIMLLGLSASAATA).

The protein belongs to the zein family.

Functionally, zeins are major seed storage proteins. The protein is Zein-alpha ZG99 of Zea mays (Maize).